A 435-amino-acid chain; its full sequence is Cyclin-dependent kinase 15 (435 aa).

A Protein kinase domain is found at 103–387; it reads YLNLEKLGEG…AQEALVHDYF (285 aa). Residues 109–117 and Lys-132 each bind ATP; that span reads LGEGSYATV. The Proton acceptor role is filled by Asp-224.

This sequence belongs to the protein kinase superfamily. CMGC Ser/Thr protein kinase family. CDC2/CDKX subfamily. Mg(2+) serves as cofactor.

It carries out the reaction L-seryl-[protein] + ATP = O-phospho-L-seryl-[protein] + ADP + H(+). The catalysed reaction is L-threonyl-[protein] + ATP = O-phospho-L-threonyl-[protein] + ADP + H(+). Its function is as follows. Serine/threonine-protein kinase that acts like an antiapoptotic protein that counters TRAIL/TNFSF10-induced apoptosis by inducing phosphorylation of BIRC5 at 'Thr-34'. This chain is Cyclin-dependent kinase 15 (CDK15), found in Homo sapiens (Human).